The following is a 146-amino-acid chain: Hemoglobin subunit beta (146 aa).

V1 carries the post-translational modification N-acetylvaline. One can recognise a Globin domain in the interval 2–146; the sequence is HLSSEEKGLI…VANALAHKYH (145 aa). Position 12 is a phosphothreonine (T12). K59 carries the post-translational modification N6-acetyllysine. A heme b-binding site is contributed by H63. K82 carries the post-translational modification N6-acetyllysine. H92 contacts heme b. S-nitrosocysteine is present on C93. The residue at position 144 (K144) is an N6-acetyllysine.

Belongs to the globin family. As to quaternary structure, heterotetramer of two alpha chains and two beta chains. Red blood cells.

In terms of biological role, involved in oxygen transport from the lung to the various peripheral tissues. The protein is Hemoglobin subunit beta (HBB) of Potorous tridactylus (Potoroo).